The following is a 96-amino-acid chain: MGSGYAKKKKEAKIMEQQFLEMEASLEKKRYEGQAGNGLVSVVINGKCDIVSVKVQPTCLDPEEPEVIEDLFRSAFKEAKTAMDQEMSVMRAGLPF.

Belongs to the YbaB/EbfC family. As to quaternary structure, homodimer.

Its subcellular location is the cytoplasm. It localises to the nucleoid. Its function is as follows. Binds to DNA and alters its conformation. May be involved in regulation of gene expression, nucleoid organization and DNA protection. The chain is Nucleoid-associated protein CF0672 from Chlamydia felis (strain Fe/C-56) (Chlamydophila felis).